A 205-amino-acid polypeptide reads, in one-letter code: Ribosomal RNA large subunit methyltransferase E (205 aa).

S-adenosyl-L-methionine-binding residues include G60, W62, D80, D96, and D121. The Proton acceptor role is filled by K161.

This sequence belongs to the class I-like SAM-binding methyltransferase superfamily. RNA methyltransferase RlmE family.

It localises to the cytoplasm. It carries out the reaction uridine(2552) in 23S rRNA + S-adenosyl-L-methionine = 2'-O-methyluridine(2552) in 23S rRNA + S-adenosyl-L-homocysteine + H(+). In terms of biological role, specifically methylates the uridine in position 2552 of 23S rRNA at the 2'-O position of the ribose in the fully assembled 50S ribosomal subunit. The sequence is that of Ribosomal RNA large subunit methyltransferase E from Chromobacterium violaceum (strain ATCC 12472 / DSM 30191 / JCM 1249 / CCUG 213 / NBRC 12614 / NCIMB 9131 / NCTC 9757 / MK).